Here is a 198-residue protein sequence, read N- to C-terminus: Large ribosomal subunit protein bL12m (198 aa).

Residues 1–36 (MLPAAARPLWGPCLGLRAAAFRLARRQVPCVCAVRH) constitute a mitochondrion transit peptide. Residues K125, K138, K142, and K144 each carry the N6-acetyllysine modification. N6-acetyllysine; alternate is present on K150. N6-succinyllysine; alternate is present on K150. K150 participates in a covalent cross-link: Glycyl lysine isopeptide (Lys-Gly) (interchain with G-Cter in ubiquitin). An N6-succinyllysine modification is found at K162. 2 positions are modified to N6-acetyllysine: K163 and K173. K178 is subject to N6-acetyllysine; alternate. At K178 the chain carries N6-succinyllysine; alternate. The residue at position 185 (K185) is an N6-acetyllysine.

Belongs to the bacterial ribosomal protein bL12 family. Component of the mitochondrial large ribosomal subunit (mt-LSU). Mature mammalian 55S mitochondrial ribosomes consist of a small (28S) and a large (39S) subunit. The 28S small subunit contains a 12S ribosomal RNA (12S mt-rRNA) and 30 different proteins. The 39S large subunit contains a 16S rRNA (16S mt-rRNA), a copy of mitochondrial valine transfer RNA (mt-tRNA(Val)), which plays an integral structural role, and 52 different proteins. bL12m interacts with NOA1. Two mature forms are produced by differential two-step proteolytic cleavage. Cleaved by the mitochondrial processing protease to produce the long mature form and subsequently by the mitochondrial intermediate protease to produce the short mature form. Post-translationally, in the presence of CUL3, undergoes 'Lys-63'-linked ubiquitination at Lys-150 which results in proteasomal degradation.

The protein localises to the mitochondrion matrix. In terms of biological role, as a component of the mitochondrial large ribosomal subunit, plays a role in mitochondrial translation. When present in mitochondria as a free protein not associated with the ribosome, associates with mitochondrial RNA polymerase POLRMT to activate transcription. Required for POLRMT stability. This Homo sapiens (Human) protein is Large ribosomal subunit protein bL12m (MRPL12).